A 299-amino-acid polypeptide reads, in one-letter code: Acetylglutamate kinase (299 aa).

Residues 72 to 73 (GG), Arg-94, and Asn-196 contribute to the substrate site.

Belongs to the acetylglutamate kinase family. ArgB subfamily.

The protein localises to the cytoplasm. It carries out the reaction N-acetyl-L-glutamate + ATP = N-acetyl-L-glutamyl 5-phosphate + ADP. The protein operates within amino-acid biosynthesis; L-arginine biosynthesis; N(2)-acetyl-L-ornithine from L-glutamate: step 2/4. Its function is as follows. Catalyzes the ATP-dependent phosphorylation of N-acetyl-L-glutamate. The polypeptide is Acetylglutamate kinase (Burkholderia ambifaria (strain MC40-6)).